Here is a 195-residue protein sequence, read N- to C-terminus: Segregation and condensation protein B (195 aa).

Belongs to the ScpB family. As to quaternary structure, homodimer. Homodimerization may be required to stabilize the binding of ScpA to the Smc head domains. Component of a cohesin-like complex composed of ScpA, ScpB and the Smc homodimer, in which ScpA and ScpB bind to the head domain of Smc. The presence of the three proteins is required for the association of the complex with DNA.

The protein localises to the cytoplasm. Functionally, participates in chromosomal partition during cell division. May act via the formation of a condensin-like complex containing Smc and ScpA that pull DNA away from mid-cell into both cell halves. This Clostridium perfringens (strain SM101 / Type A) protein is Segregation and condensation protein B.